The primary structure comprises 98 residues: Putative transcriptional regulator YdaS (98 aa).

In terms of biological role, when overexpressed, it induces Rac prophage excision, possibly to counteract the lethal toxicity of YdaT. Overexpression of ydaS or ydaST reduces growth and leads to loss of cell viability. May contribute to toxicity and morphological defects. This chain is Putative transcriptional regulator YdaS (ydaS), found in Escherichia coli (strain K12).